Reading from the N-terminus, the 96-residue chain is MKYFNGLFSIFFFLLLTNYLNFNSRISNQLNQMLLDDGWIDKVKQLTREEMERSDSTNFVDILNKVEPQALNMVNDKTRTEILQTIKEFLNDIVEV.

It belongs to the ENY2 family. As to quaternary structure, component of the nuclear pore complex (NPC)-associated TREX-2 complex (transcription and export complex 2), composed of at least SUS1, SAC3, THP1, SEM1, and CDC31. TREX-2 contains 2 SUS1 chains. The TREX-2 complex interacts with the nucleoporin NUP1. Component of the 1.8 MDa SAGA transcription coactivator-HAT complex. SAGA is built of 5 distinct domains with specialized functions. Within the SAGA complex, SUS1, SGF11, SGF73 and UBP8 form an additional subcomplex of SAGA called the DUB module (deubiquitination module). Interacts directly with THP1, SAC3, SGF11, and with the RNA polymerase II.

The protein resides in the nucleus. The protein localises to the nucleoplasm. It localises to the cytoplasm. It is found in the P-body. Functionally, involved in mRNA export coupled transcription activation by association with both the TREX-2 and the SAGA complexes. At the promoters, SAGA is required for recruitment of the basal transcription machinery. It influences RNA polymerase II transcriptional activity through different activities such as TBP interaction and promoter selectivity, interaction with transcription activators, and chromatin modification through histone acetylation and deubiquitination. Within the SAGA complex, participates in a subcomplex required for deubiquitination of H2B and for the maintenance of steady-state H3 methylation levels. The TREX-2 complex functions in docking export-competent ribonucleoprotein particles (mRNPs) to the nuclear entrance of the nuclear pore complex (nuclear basket). TREX-2 participates in mRNA export and accurate chromatin positioning in the nucleus by tethering genes to the nuclear periphery. May also be involved in cytoplasmic mRNA decay by interaction with components of P-bodies. This Kluyveromyces lactis (strain ATCC 8585 / CBS 2359 / DSM 70799 / NBRC 1267 / NRRL Y-1140 / WM37) (Yeast) protein is Transcription and mRNA export factor SUS1.